We begin with the raw amino-acid sequence, 121 residues long: Small ribosomal subunit protein uS13 (121 aa).

The disordered stretch occupies residues 93–121 (KGLPLRGQKTKTNARTRKGPKKTIANKKK).

Belongs to the universal ribosomal protein uS13 family. As to quaternary structure, part of the 30S ribosomal subunit. Forms a loose heterodimer with protein S19. Forms two bridges to the 50S subunit in the 70S ribosome.

In terms of biological role, located at the top of the head of the 30S subunit, it contacts several helices of the 16S rRNA. In the 70S ribosome it contacts the 23S rRNA (bridge B1a) and protein L5 of the 50S subunit (bridge B1b), connecting the 2 subunits; these bridges are implicated in subunit movement. Contacts the tRNAs in the A and P-sites. The chain is Small ribosomal subunit protein uS13 from Clostridium perfringens (strain ATCC 13124 / DSM 756 / JCM 1290 / NCIMB 6125 / NCTC 8237 / Type A).